Consider the following 290-residue polypeptide: Bifunctional protein FolD (290 aa).

NADP(+) is bound by residues 166–168 (GQS), serine 191, and isoleucine 232.

Belongs to the tetrahydrofolate dehydrogenase/cyclohydrolase family. As to quaternary structure, homodimer.

The enzyme catalyses (6R)-5,10-methylene-5,6,7,8-tetrahydrofolate + NADP(+) = (6R)-5,10-methenyltetrahydrofolate + NADPH. It carries out the reaction (6R)-5,10-methenyltetrahydrofolate + H2O = (6R)-10-formyltetrahydrofolate + H(+). Its pathway is one-carbon metabolism; tetrahydrofolate interconversion. Functionally, catalyzes the oxidation of 5,10-methylenetetrahydrofolate to 5,10-methenyltetrahydrofolate and then the hydrolysis of 5,10-methenyltetrahydrofolate to 10-formyltetrahydrofolate. The polypeptide is Bifunctional protein FolD (Halorhodospira halophila (strain DSM 244 / SL1) (Ectothiorhodospira halophila (strain DSM 244 / SL1))).